The sequence spans 398 residues: Circumsporozoite protein (398 aa).

A signal peptide spans 1-23 (MKNFNLLAVSSILLVDLFRTQWG). The segment at 50–110 (AQVRQSASRG…AAAGEAGNNA (61 aa)) is disordered. A compositionally biased stretch (basic and acidic residues) spans 66 to 93 (PKNEEGADKPKKKDEKQVEPKKPRENKL). The interval 81 to 89 (KQVEPKKPR) is required for the binding to heparan sulfate proteoglycans (HSPGs) on the surface of host hepatocytes. Residues 92-96 (KLKQP) form a region I; contains the proteolytic cleavage site region. Repeat copies occupy residues 97–105 (AGNNAAAGE), 106–114 (AGNNAAAGE), 115–123 (AGNNAAAGE), 124–132 (AGNNAAAGE), 133–141 (AGNNAAAGE), 142–150 (AGNNAAAGE), 151–159 (AGNNAAGGA), 160–168 (AGNNAAGGE), 169–177 (AGNNAAGGA), 178–186 (AGNNAAAGE), 187–195 (AGNNAAGGE), 196–204 (AGNNAAAGE), 205–213 (AGNNAAGGA), 214–222 (AGNNAAAGE), 223–231 (AGNNAAAGA), 232–240 (AGNNAAAGA), 241–257 (AGNNAAAGEAGAGGAGR), 258–274 (AGNNAAAGEAGAGGAGR), and 275–291 (AGNNAAAGEAGAGGAGG). The segment covering 97–110 (AGNNAAAGEAGNNA) has biased composition (low complexity). The interval 97 to 240 (AGNNAAAGEA…AAGNNAAAGA (144 aa)) is 16 X 9 AA tandem repeats of A-G-N-N-A-A-[AG]-G-[EA]. The 3 X 17 AA tandem repeats of A-G-N-N-A-A-A-G-E-A-G-A-G-G-A-G-[RG] stretch occupies residues 241 to 291 (AGNNAAAGEAGAGGAGRAGNNAAAGEAGAGGAGRAGNNAAAGEAGAGGAGG). A disordered region spans residues 248–310 (GEAGAGGAGR…AGQGQNNGGA (63 aa)). Residues 284 to 293 (AGAGGAGGNA) are compositionally biased toward gly residues. Residues 324 to 376 (KIRSTIGVEWSPCSVTCGKGVRMRRKVNAANKKPEELDANDLETEVCTMDKCA) enclose the TSP type-1 domain. Disulfide bonds link Cys-336–Cys-370 and Cys-340–Cys-375. Thr-339 carries O-linked (Fuc) threonine glycosylation. Cys-375 is lipidated: GPI-anchor amidated cysteine. Residues 376–398 (AGIFNVVSNSLGLVILLVLALFN) constitute a propeptide, removed in mature form.

Belongs to the plasmodium circumsporozoite protein family. Post-translationally, during host cell invasion, proteolytically cleaved at the cell membrane in the region I by a papain-like cysteine protease of parasite origin. Cleavage is triggered by the sporozoite contact with highly sulfated heparan sulfate proteoglycans (HSPGs) present on the host hepatocyte cell surface. Cleavage exposes the TSP type-1 (TSR) domain and is required for productive invasion of host hepatocytes but not for adhesion to the host cell membrane. Cleavage is dispensable for sporozoite development in the oocyst, motility and for traversal of host and vector cells. O-glycosylated; maybe by POFUT2.

It is found in the cell membrane. The protein resides in the cytoplasm. Its function is as follows. Essential sporozoite protein. In the mosquito vector, required for sporozoite development in the oocyst, migration through the vector hemolymph and entry into the vector salivary glands. In the vertebrate host, required for sporozoite migration through the host dermis and infection of host hepatocytes. Binds to highly sulfated heparan sulfate proteoglycans (HSPGs) on the surface of host hepatocytes. Functionally, in the vertebrate host, binds to highly sulfated heparan sulfate proteoglycans (HSPGs) on the surface of host hepatocytes and is required for sporozoite invasion of the host hepatocytes. The chain is Circumsporozoite protein from Plasmodium cynomolgi (strain Ceylon).